A 217-amino-acid chain; its full sequence is Dephospho-CoA kinase (217 aa).

In terms of domain architecture, DPCK spans 2 to 217 (VIGLTGGIAS…RELARIEEQK (216 aa)). 10-15 (ASGKST) provides a ligand contact to ATP.

Belongs to the CoaE family.

The protein localises to the cytoplasm. The catalysed reaction is 3'-dephospho-CoA + ATP = ADP + CoA + H(+). It participates in cofactor biosynthesis; coenzyme A biosynthesis; CoA from (R)-pantothenate: step 5/5. Catalyzes the phosphorylation of the 3'-hydroxyl group of dephosphocoenzyme A to form coenzyme A. The sequence is that of Dephospho-CoA kinase from Lactococcus lactis subsp. lactis (strain IL1403) (Streptococcus lactis).